Here is a 223-residue protein sequence, read N- to C-terminus: ATP synthase subunit a 1 (223 aa).

The next 5 membrane-spanning stretches (helical) occupy residues 20-40, 78-98, 107-127, 173-193, and 194-214; these read QTIVMTWVIMVFLAGGSAFLT, YLSYLATLFLFVATAVLFTII, SLSTTAALALSVFVAVPLYGI, VMIIGILLGIAPLFFPVLMSV, and LGLLTGMVQAYIFSMLATVYI.

Belongs to the ATPase A chain family. As to quaternary structure, F-type ATPases have 2 components, CF(1) - the catalytic core - and CF(0) - the membrane proton channel. CF(1) has five subunits: alpha(3), beta(3), gamma(1), delta(1), epsilon(1). CF(0) has four main subunits: a, b, b' and c.

It is found in the cell inner membrane. In terms of biological role, key component of the proton channel; it plays a direct role in the translocation of protons across the membrane. This chain is ATP synthase subunit a 1, found in Prosthecochloris aestuarii (strain DSM 271 / SK 413).